The chain runs to 735 residues: Trafficking protein particle complex subunit 12 (735 aa).

Disordered regions lie at residues 1–204 (MEDA…QPSP) and 237–276 (NPGA…PPAS). Residues 13-22 (PEAPHPPQLA) show a composition bias toward pro residues. A compositionally biased stretch (acidic residues) spans 34–50 (ETIDLGGDEFGSEENET). A phosphoserine mark is found at Ser109 and Ser184. TPR repeat units lie at residues 545–578 (GRVM…YPEQ), 580–613 (PQLL…TQKL), 620–653 (IMVL…DPRN), and 654–687 (AVAN…DPRH).

Component of the multisubunit TRAPP (transport protein particle) complex, which includes at least TRAPPC2, TRAPPC2L, TRAPPC3, TRAPPC3L, TRAPPC4, TRAPPC5, TRAPPC8, TRAPPC9, TRAPPC10, TRAPPC11 and TRAPPC12. Interacts with CENPE. Phosphorylated as the cells enter mitosis but is dephosphorylated at or before the onset of anaphase. The phosphorylated form recruits CENPE to kinetochores more efficiently than the non-phosphorylated form.

It localises to the endoplasmic reticulum-Golgi intermediate compartment. Its subcellular location is the nucleus. Component of the TRAPP complex, which is involved in endoplasmic reticulum to Golgi apparatus trafficking at a very early stage. Also plays a role in chromosome congression, kinetochore assembly and stability and controls the recruitment of CENPE to the kinetochores. The polypeptide is Trafficking protein particle complex subunit 12 (Homo sapiens (Human)).